A 407-amino-acid chain; its full sequence is Arylacetamide deacetylase-like 4 family member 1 (407 aa).

Residues 1-4 lie on the Cytoplasmic side of the membrane; the sequence is MLYL. A helical; Signal-anchor for type II membrane protein membrane pass occupies residues 5–25; the sequence is VGFLLATVCLLVLGVNVWVLI. Topologically, residues 26 to 407 are lumenal; sequence DHFLTIDVPP…NAVVSYIKDL (382 aa). The Involved in the stabilization of the negatively charged intermediate by the formation of the oxyanion hole signature appears at 119-121; that stretch reads HGG. Asparagine 168 is a glycosylation site (N-linked (GlcNAc...) asparagine). Active-site residues include serine 193, aspartate 347, and histidine 377.

It belongs to the 'GDXG' lipolytic enzyme family.

The protein resides in the membrane. This chain is Arylacetamide deacetylase-like 4 family member 1, found in Mus musculus (Mouse).